The sequence spans 1461 residues: DNA topoisomerase 2 (1461 aa).

A compositionally biased stretch (acidic residues) spans M1–F17. Residues M1–T61 form a disordered region. A compositionally biased stretch (low complexity) spans T41–T52. Residues N120, N149, S177 to N179, and G190 to K197 contribute to the ATP site. The tract at residues S382–K389 is interaction with DNA. Q418 to K420 lines the ATP pocket. Residues C498 to L614 enclose the Toprim domain. Residues E504, D583, and D585 each contribute to the Mg(2+) site. The Topo IIA-type catalytic domain occupies I752–L1226. Y842 (O-(5'-phospho-DNA)-tyrosine intermediate) is an active-site residue. The tract at residues K1024–N1033 is interaction with DNA. Disordered stretches follow at residues D1122–N1155 and R1244–E1461. The segment covering L1133 to V1153 has biased composition (acidic residues). The span at G1251–K1261 shows a compositional bias: basic residues. 2 stretches are compositionally biased toward basic and acidic residues: residues V1274–S1283 and D1406–E1417. Over residues D1434–E1461 the composition is skewed to acidic residues.

Belongs to the type II topoisomerase family. Homodimer. The cofactor is Mg(2+). Mn(2+) is required as a cofactor. It depends on Ca(2+) as a cofactor.

Its subcellular location is the nucleus. The enzyme catalyses ATP-dependent breakage, passage and rejoining of double-stranded DNA.. In terms of biological role, control of topological states of DNA by transient breakage and subsequent rejoining of DNA strands. Topoisomerase II makes double-strand breaks. In Candida albicans (Yeast), this protein is DNA topoisomerase 2 (TOP2).